Consider the following 324-residue polypeptide: Heat-inducible transcription repressor HrcA (324 aa).

It belongs to the HrcA family.

Negative regulator of class I heat shock genes (grpE-dnaK-dnaJ and groELS operons). Prevents heat-shock induction of these operons. In Synechococcus sp. (strain CC9902), this protein is Heat-inducible transcription repressor HrcA.